The primary structure comprises 1168 residues: Transcription-repair-coupling factor (1168 aa).

The region spanning 633–794 (DMQKSRPMDR…MLGVRDLSVI (162 aa)) is the Helicase ATP-binding domain. 646-653 (GDVGYGKT) contributes to the ATP binding site. The short motif at 747–750 (DEEQ) is the DEEQ box element. The 162-residue stretch at 808 to 969 (VLEQNMSFIK…GFKIAMRDLN (162 aa)) folds into the Helicase C-terminal domain.

This sequence in the N-terminal section; belongs to the UvrB family. In the C-terminal section; belongs to the helicase family. RecG subfamily.

The protein localises to the cytoplasm. Its function is as follows. Couples transcription and DNA repair by recognizing RNA polymerase (RNAP) stalled at DNA lesions. Mediates ATP-dependent release of RNAP and its truncated transcript from the DNA, and recruitment of nucleotide excision repair machinery to the damaged site. In Staphylococcus aureus (strain MRSA252), this protein is Transcription-repair-coupling factor.